An 878-amino-acid chain; its full sequence is MGPLSRDAWAQRLGAFRASPSAFMAGPEGEDLGRDLLSDLRSEKLSEQTKVSLLALSMEYPAQLWPDASAAEVAATSLLDTLVLLPPRPSALRRPLLLAATTALAAGGALGPTSGASCRLLPLLLGLAAGSDLGRGFVPASEQRPLQATACECLRELESCKPGLLGGSLGLLRGLLGQEGPVQPLSLLLALALRNTLVLQSRVGAGLGGLLTDKVSPTGGGPWDWTLVEEGDGRLQPQAPSWPAAEEGEGERSLTAREHSPEEARELRAAVIQLLDTSYLLTPVAQAQLLWLLGWALRGLQGQPPALFKPQLVRLLGTAQLTLLHAMLALKAAFGEALFTAQDEALLLRRLTLAAQHPALPPPTHLFYLHCVLSFPENWPLGPEGEEAAPLLLGPQLCRGLLPSLLHDPMALLARLHLLCLLCAEEEEEEKGQLPSPRHYLEELLAGLRQRAALDGGPRALATLCFQASYLVACCLAGQPTVLTPLIHGLAQLYQARPMLAPHFVDLLDQVDSELREPLKVVLRQVVVSRPGRDEALCWHLQMLAKVADGDAQSATLNFLQAAAAHCTNWDLQQGLLRVCRALLRAGVRGGLVDLLQVLARQLEDPDGRDHARLYYILLAHLAAPKLGVALGPSLAAPALASSLVAENQGFVAALMVQEAPALVRLSLGSHRVKGPLPVLKLQPEALEPIYSLELRFRVEGQLYAPLEAVHVPCLCPGRPARPLLLPLQPRCPAPARLDVHALYTTSTGLTCHAHLPPLFVNFADLFLPFPQPPEGAGLGFFEELWDSCLPEGAESRVWCPLGPQGLEGLVSRHLEPFVVVAQPPTSYCVAIHLPPDSKLLLRLEAALADGVPVALRTDDWAVLPLAGDYLRGLAAAV.

Positions 234-260 (RLQPQAPSWPAAEEGEGERSLTAREHS) are disordered. A compositionally biased stretch (basic and acidic residues) spans 250–260 (GERSLTAREHS).

Probably part of the adaptor protein complex 5 (AP-5), a tetramer composed of AP5B1, AP5M1, AP5S1 and AP5Z1. Interacts with ZFYVE26 and SPG11.

Its function is as follows. As part of AP-5, a probable fifth adaptor protein complex it may be involved in endosomal transport. The chain is AP-5 complex subunit beta-1 (AP5B1) from Homo sapiens (Human).